Reading from the N-terminus, the 352-residue chain is MSSEYLIRSLLMLFLALFSANASNWLYLAKLSSVGSISDEETCEKLRGLIQRQVQICKRNVEVMDAVRRGAQLAIDECQYQFRNRRWNCSTLESVPVFGKVVTQGTREAAFVYAISAASVAFAVTRACSSGELDKCGCDRNVHGVSPEGFQWSGCSDNIAYGVAFSQSFVDIRERSKGQSSNRALMNLHNNEAGRKAILNHMRVECKCHGVSGSCEVKTCWKAMPPFRKVGNVIKEKFDGATEVELRKVGTTKVLVPRNSQFKPHTDEDLVYLDPSPDFCEHDPRTPGIMGTAGRFCNKTSKAIDGCELMCCGRGFHTEEVEVVDRCSCKFHWCCYVKCKQCRKMVEMHTCR.

Residues 1–22 form the signal peptide; the sequence is MSSEYLIRSLLMLFLALFSANA. Intrachain disulfides connect Cys78-Cys89, Cys128-Cys136, Cys138-Cys155, Cys206-Cys220, Cys208-Cys215, Cys280-Cys312, Cys297-Cys307, Cys311-Cys351, Cys327-Cys342, Cys329-Cys339, and Cys334-Cys335. N-linked (GlcNAc...) asparagine glycosylation occurs at Asn88. Ser212 is lipidated: O-palmitoleoyl serine; by PORCN. N-linked (GlcNAc...) asparagine glycosylation is present at Asn298.

Belongs to the Wnt family. In terms of processing, palmitoleoylation is required for efficient binding to frizzled receptors. Depalmitoleoylation leads to Wnt signaling pathway inhibition. As to expression, caudal forebrain and neural keel, the floor plate, the gill slit and the developing pronephros.

The protein resides in the secreted. It localises to the extracellular space. Its subcellular location is the extracellular matrix. Functionally, ligand for members of the frizzled family of seven transmembrane receptors. Plays an important role in embryonic development. In Danio rerio (Zebrafish), this protein is Protein Wnt-4a (wnt4a).